The primary structure comprises 250 residues: Phosphoribosylaminoimidazole-succinocarboxamide synthase (250 aa).

This sequence belongs to the SAICAR synthetase family.

It catalyses the reaction 5-amino-1-(5-phospho-D-ribosyl)imidazole-4-carboxylate + L-aspartate + ATP = (2S)-2-[5-amino-1-(5-phospho-beta-D-ribosyl)imidazole-4-carboxamido]succinate + ADP + phosphate + 2 H(+). The protein operates within purine metabolism; IMP biosynthesis via de novo pathway; 5-amino-1-(5-phospho-D-ribosyl)imidazole-4-carboxamide from 5-amino-1-(5-phospho-D-ribosyl)imidazole-4-carboxylate: step 1/2. The chain is Phosphoribosylaminoimidazole-succinocarboxamide synthase from Bifidobacterium longum (strain DJO10A).